The primary structure comprises 504 residues: ATP synthase subunit alpha (504 aa).

Position 171–178 (171–178 (GDRQTGKT)) interacts with ATP.

This sequence belongs to the ATPase alpha/beta chains family. F-type ATPases have 2 components, CF(1) - the catalytic core - and CF(0) - the membrane proton channel. CF(1) has five subunits: alpha(3), beta(3), gamma(1), delta(1), epsilon(1). CF(0) has three main subunits: a(1), b(2) and c(9-12). The alpha and beta chains form an alternating ring which encloses part of the gamma chain. CF(1) is attached to CF(0) by a central stalk formed by the gamma and epsilon chains, while a peripheral stalk is formed by the delta and b chains.

The protein localises to the cell inner membrane. It catalyses the reaction ATP + H2O + 4 H(+)(in) = ADP + phosphate + 5 H(+)(out). Functionally, produces ATP from ADP in the presence of a proton gradient across the membrane. The alpha chain is a regulatory subunit. This Helicobacter hepaticus (strain ATCC 51449 / 3B1) protein is ATP synthase subunit alpha.